A 173-amino-acid chain; its full sequence is Ribosome maturation factor RimM (173 aa).

Residues 92–165 (EDEYYHTDLI…RVVVALPQEI (74 aa)) form the PRC barrel domain.

It belongs to the RimM family. As to quaternary structure, binds ribosomal protein uS19.

It is found in the cytoplasm. Functionally, an accessory protein needed during the final step in the assembly of 30S ribosomal subunit, possibly for assembly of the head region. Essential for efficient processing of 16S rRNA. May be needed both before and after RbfA during the maturation of 16S rRNA. It has affinity for free ribosomal 30S subunits but not for 70S ribosomes. In Bradyrhizobium diazoefficiens (strain JCM 10833 / BCRC 13528 / IAM 13628 / NBRC 14792 / USDA 110), this protein is Ribosome maturation factor RimM.